We begin with the raw amino-acid sequence, 425 residues long: Enolase (425 aa).

Gln-162 lines the (2R)-2-phosphoglycerate pocket. Glu-204 acts as the Proton donor in catalysis. Residues Asp-241, Glu-282, and Asp-309 each contribute to the Mg(2+) site. (2R)-2-phosphoglycerate contacts are provided by Lys-334, Arg-363, Ser-364, and Lys-385. Catalysis depends on Lys-334, which acts as the Proton acceptor.

The protein belongs to the enolase family. Requires Mg(2+) as cofactor.

Its subcellular location is the cytoplasm. It is found in the secreted. The protein localises to the cell surface. The catalysed reaction is (2R)-2-phosphoglycerate = phosphoenolpyruvate + H2O. It participates in carbohydrate degradation; glycolysis; pyruvate from D-glyceraldehyde 3-phosphate: step 4/5. Catalyzes the reversible conversion of 2-phosphoglycerate (2-PG) into phosphoenolpyruvate (PEP). It is essential for the degradation of carbohydrates via glycolysis. This Micrococcus luteus (strain ATCC 4698 / DSM 20030 / JCM 1464 / CCM 169 / CCUG 5858 / IAM 1056 / NBRC 3333 / NCIMB 9278 / NCTC 2665 / VKM Ac-2230) (Micrococcus lysodeikticus) protein is Enolase.